The sequence spans 254 residues: Transmembrane protein 269 (254 aa).

The next 5 helical transmembrane spans lie at 44-64 (IINALALANMILGLFSIFCSF), 69-89 (YCASWMLLISFLLDIAIGTMT), 113-135 (LASALLLGVDGPLNGFLAIIYVL), 171-191 (LTKGNTFILCCMASLMILFMI), and 210-230 (IVYIGGVILLFFSPFPLTAFY).

Its subcellular location is the membrane. The sequence is that of Transmembrane protein 269 from Mus musculus (Mouse).